The primary structure comprises 763 residues: Phosphoglycerol transferase I (763 aa).

4 consecutive transmembrane segments (helical) span residues 4–19, 26–48, 76–98, and 105–127; these read LLSF…IYAW, WWFA…LFAS, YILP…GWIL, and PHHF…ASPA.

The protein belongs to the OpgB family.

It localises to the cell inner membrane. The catalysed reaction is a phosphatidylglycerol + a membrane-derived-oligosaccharide D-glucose = a 1,2-diacyl-sn-glycerol + a membrane-derived-oligosaccharide 6-(glycerophospho)-D-glucose.. It participates in glycan metabolism; osmoregulated periplasmic glucan (OPG) biosynthesis. Transfers a phosphoglycerol residue from phosphatidylglycerol to the membrane-bound nascent glucan backbones. The chain is Phosphoglycerol transferase I from Shigella flexneri.